The following is a 1487-amino-acid chain: Chromosome partition protein MukB (1487 aa).

34–41 (GGNGAGKS) lines the ATP pocket. Coiled-coil stretches lie at residues 297–458 (GSRE…TNAL), 506–601 (RESQ…LEAI), 637–666 (LEQE…RLAS), 781–806 (RAAR…AKAA), 836–1109 (EQAL…ELRT), and 1210–1266 (VEAI…LSNI). The segment at 667 to 784 (PGGSNDPRLK…EIPLFGRAAR (118 aa)) is flexible hinge.

The protein belongs to the SMC family. MukB subfamily. Homodimerization via its hinge domain. Binds to DNA via its C-terminal region. Interacts, and probably forms a ternary complex, with MukE and MukF via its C-terminal region. The complex formation is stimulated by calcium or magnesium. Interacts with tubulin-related protein FtsZ.

It is found in the cytoplasm. Its subcellular location is the nucleoid. Functionally, plays a central role in chromosome condensation, segregation and cell cycle progression. Functions as a homodimer, which is essential for chromosome partition. Involved in negative DNA supercoiling in vivo, and by this means organize and compact chromosomes. May achieve or facilitate chromosome segregation by condensation DNA from both sides of a centrally located replisome during cell division. The sequence is that of Chromosome partition protein MukB from Vibrio parahaemolyticus serotype O3:K6 (strain RIMD 2210633).